The primary structure comprises 105 residues: Large ribosomal subunit protein uL24 (105 aa).

The protein belongs to the universal ribosomal protein uL24 family. In terms of assembly, part of the 50S ribosomal subunit.

One of two assembly initiator proteins, it binds directly to the 5'-end of the 23S rRNA, where it nucleates assembly of the 50S subunit. In terms of biological role, one of the proteins that surrounds the polypeptide exit tunnel on the outside of the subunit. This is Large ribosomal subunit protein uL24 from Xanthomonas oryzae pv. oryzae (strain MAFF 311018).